We begin with the raw amino-acid sequence, 959 residues long: Isoleucine--tRNA ligase (959 aa).

The 'HIGH' region signature appears at 60-70; it reads PYANGSLHMGH. Glutamate 569 provides a ligand contact to L-isoleucyl-5'-AMP. The 'KMSKS' region signature appears at 610-614; the sequence is KMSKS. Lysine 613 serves as a coordination point for ATP. Zn(2+) is bound by residues cysteine 928, cysteine 931, cysteine 948, and cysteine 951.

It belongs to the class-I aminoacyl-tRNA synthetase family. IleS type 1 subfamily. In terms of assembly, monomer. It depends on Zn(2+) as a cofactor.

It localises to the cytoplasm. It catalyses the reaction tRNA(Ile) + L-isoleucine + ATP = L-isoleucyl-tRNA(Ile) + AMP + diphosphate. In terms of biological role, catalyzes the attachment of isoleucine to tRNA(Ile). As IleRS can inadvertently accommodate and process structurally similar amino acids such as valine, to avoid such errors it has two additional distinct tRNA(Ile)-dependent editing activities. One activity is designated as 'pretransfer' editing and involves the hydrolysis of activated Val-AMP. The other activity is designated 'posttransfer' editing and involves deacylation of mischarged Val-tRNA(Ile). The sequence is that of Isoleucine--tRNA ligase from Crocosphaera subtropica (strain ATCC 51142 / BH68) (Cyanothece sp. (strain ATCC 51142)).